Here is a 366-residue protein sequence, read N- to C-terminus: MSGLVKAKRYDWKDSNLAMFGSALDKSVKKESALKEAAWKGVGEKVGLKIWRIVNFKVTEWPEKDYGSFFSGDSYIILNTYKLKGREELAYDVHFWIGSKSTQDEYCVAAYKTVELDAYLDDAAIQHRDAEGNESDLFLSYFENGLTIMEGGAEMGFNNVKPEEYKARLLHFSGLKKHIVVKEVPLCPQRLKSDDVFILDLGRTLYQWNGTGSNKDERFKAMQYLQNLKAERGAATSKTLEEEHIDKSHEFYTSLTGEDEDLPEDQTDSAAVKTLLRVSDAAGHFKSTVVKTGHIAASDLDSKDVFILDNGSTCFVWVGNGASAQEKRNGLGYAHSHLMKTPHPLIPILRHQRGQASKCFNAALAA.

Gelsolin-like repeat units lie at residues 55-139 (NFKV…DLFL), 177-252 (KHIV…HEFY), and 286-327 (KSTV…AQEK). The interval 100–116 (KSTQDEYCVAAYKTVEL) is actin binding. Residues 104–107 (DEYC) form an actin-actin interfilament contact point region.

It belongs to the villin/gelsolin family. Interacts with actin monomers and filaments. As to expression, expressed in circular and longitudinal muscle, pseudohearts, pharynx and gizzard. Not expressed in seminal vesicles.

It is found in the cytoplasm. It localises to the cytoskeleton. Its function is as follows. Calcium-regulated protein that binds to the plus (or barbed) ends of actin monomers or filaments, preventing monomer exchange (end-blocking or capping). Can promote the assembly of monomers into filaments (nucleation) as well as sever existing filaments. The protein is Gelsolin-like protein 2 of Lumbricus terrestris (Common earthworm).